The chain runs to 585 residues: Serine protease HtrA-like (585 aa).

Residues 1 to 184 (MDNNKKQVIP…QPKDKDNDNT (184 aa)) form a disordered region. The span at 21–82 (YFHNVEREER…IHQQRDDKSY (62 aa)) shows a compositional bias: basic and acidic residues. Polar residues predominate over residues 84-94 (QKTLNQNNQMN). The segment covering 95–113 (KSKDDDNKIGEESLHDVRV) has biased composition (basic and acidic residues). A compositionally biased stretch (polar residues) spans 114–124 (SSDTSTLPHQN). The span at 126–139 (SIKDYDDSGNESKQ) shows a compositional bias: basic and acidic residues. A compositionally biased stretch (polar residues) spans 151 to 175 (GVNSNHTEQDSRSTQPYSSKHSYSQ). Residues 224 to 244 (MLIIIGIIVLLLILNAIFTTV) form a helical membrane-spanning segment. Catalysis depends on charge relay system residues histidine 320, aspartate 350, and serine 435. The PDZ domain maps to 516–575 (GVLIGEVKENGLGDKAGLKKGDVIVELDGKKIEDNLRYRQVIYSHYDDQKTITAKIYRNG).

This sequence belongs to the peptidase S1C family.

The protein localises to the cell membrane. The chain is Serine protease HtrA-like from Staphylococcus epidermidis (strain ATCC 35984 / DSM 28319 / BCRC 17069 / CCUG 31568 / BM 3577 / RP62A).